Consider the following 387-residue polypeptide: Exodeoxyribonuclease 7 large subunit (387 aa).

Belongs to the XseA family. Heterooligomer composed of large and small subunits.

Its subcellular location is the cytoplasm. It carries out the reaction Exonucleolytic cleavage in either 5'- to 3'- or 3'- to 5'-direction to yield nucleoside 5'-phosphates.. Functionally, bidirectionally degrades single-stranded DNA into large acid-insoluble oligonucleotides, which are then degraded further into small acid-soluble oligonucleotides. This is Exodeoxyribonuclease 7 large subunit from Campylobacter jejuni subsp. doylei (strain ATCC BAA-1458 / RM4099 / 269.97).